A 456-amino-acid chain; its full sequence is ATP synthase subunit beta 1 (456 aa).

Gly-152–Ser-159 lines the ATP pocket.

Belongs to the ATPase alpha/beta chains family. In terms of assembly, F-type ATPases have 2 components, CF(1) - the catalytic core - and CF(0) - the membrane proton channel. CF(1) has five subunits: alpha(3), beta(3), gamma(1), delta(1), epsilon(1). CF(0) has three main subunits: a(1), b(2) and c(9-12). The alpha and beta chains form an alternating ring which encloses part of the gamma chain. CF(1) is attached to CF(0) by a central stalk formed by the gamma and epsilon chains, while a peripheral stalk is formed by the delta and b chains.

The protein localises to the cell membrane. It carries out the reaction ATP + H2O + 4 H(+)(in) = ADP + phosphate + 5 H(+)(out). In terms of biological role, produces ATP from ADP in the presence of a proton gradient across the membrane. The catalytic sites are hosted primarily by the beta subunits. In Listeria innocua serovar 6a (strain ATCC BAA-680 / CLIP 11262), this protein is ATP synthase subunit beta 1.